The chain runs to 97 residues: Aspartyl/glutamyl-tRNA(Asn/Gln) amidotransferase subunit C (97 aa).

The protein belongs to the GatC family. Heterotrimer of A, B and C subunits.

The enzyme catalyses L-glutamyl-tRNA(Gln) + L-glutamine + ATP + H2O = L-glutaminyl-tRNA(Gln) + L-glutamate + ADP + phosphate + H(+). The catalysed reaction is L-aspartyl-tRNA(Asn) + L-glutamine + ATP + H2O = L-asparaginyl-tRNA(Asn) + L-glutamate + ADP + phosphate + 2 H(+). Its function is as follows. Allows the formation of correctly charged Asn-tRNA(Asn) or Gln-tRNA(Gln) through the transamidation of misacylated Asp-tRNA(Asn) or Glu-tRNA(Gln) in organisms which lack either or both of asparaginyl-tRNA or glutaminyl-tRNA synthetases. The reaction takes place in the presence of glutamine and ATP through an activated phospho-Asp-tRNA(Asn) or phospho-Glu-tRNA(Gln). This chain is Aspartyl/glutamyl-tRNA(Asn/Gln) amidotransferase subunit C, found in Sulfolobus acidocaldarius (strain ATCC 33909 / DSM 639 / JCM 8929 / NBRC 15157 / NCIMB 11770).